Consider the following 484-residue polypeptide: Glutamate--tRNA ligase (484 aa).

The 'HIGH' region signature appears at 9-19 (PSPTGNLHIGT). Zn(2+) is bound by residues cysteine 98, cysteine 100, histidine 125, and histidine 127. The short motif at 250-254 (KLSKR) is the 'KMSKS' region element. Lysine 253 lines the ATP pocket.

Belongs to the class-I aminoacyl-tRNA synthetase family. Glutamate--tRNA ligase type 1 subfamily. In terms of assembly, monomer. It depends on Zn(2+) as a cofactor.

It localises to the cytoplasm. It carries out the reaction tRNA(Glu) + L-glutamate + ATP = L-glutamyl-tRNA(Glu) + AMP + diphosphate. Catalyzes the attachment of glutamate to tRNA(Glu) in a two-step reaction: glutamate is first activated by ATP to form Glu-AMP and then transferred to the acceptor end of tRNA(Glu). The sequence is that of Glutamate--tRNA ligase from Crocosphaera subtropica (strain ATCC 51142 / BH68) (Cyanothece sp. (strain ATCC 51142)).